A 179-amino-acid chain; its full sequence is UPF0227 protein Ssed_2836 (179 aa).

This sequence belongs to the UPF0227 family.

The chain is UPF0227 protein Ssed_2836 from Shewanella sediminis (strain HAW-EB3).